Consider the following 367-residue polypeptide: uncharacterized protein (367 aa).

Residues 333 to 367 are disordered; the sequence is RERRPTLNAQRAHAAAQQQPRRRNRRQQGTGASAS. Residues 341 to 351 show a composition bias toward low complexity; it reads AQRAHAAAQQQ.

This is an uncharacterized protein from Amazona oratrix (yellow-headed parrot).